Here is a 1148-residue protein sequence, read N- to C-terminus: MSVPDYMQCAEDHQTLLVVVQPVGIVSEENFFRIYKRICSVSQISVRDSQRVLYIRYRHHYPPENNEWGDFQTHRKVVGLITITDCFSAKDWPQTFEKFHVQKEIYGSTLYDSRLFVFGLQGEIVEQPRTDVAFYPNYEDCQTVEKRIEDFIESLFIVLESKRLDRATDKSGDKIPLLCVPFEKKDFVGLDTDSRHYKKRCQGRMRKHVGDLCLQAGMLQDSLVHYHMSVELLRSVNDFLWLGAALEGLCSASVIYHYPGGTGGKSGARRFQGSTLPAEAANRHRPGAQEVLIDPGALTTNGINPDTSTEIGRAKNCLSPEDIIDKYKEAISYYSKYKNAGVIELEACIKAVRVLAIQKRSMEASEFLQNAVYINLRQLSEEEKIQRYSILSELYELIGFHRKSAFFKRVAAMQCVAPSIAEPGWRACYKLLLETLPGYSLSLDPKDFSRGTHRGWAAVQMRLLHELVYASRRMGNPALSVRHLSFLLQTMLDFLSDQEKKDVAQSLENYTSKCPGTMEPIALPGGLTLPPVPFTKLPIVRHVKLLNLPASLRPHKMKSLLGQNVSTKSPFIYSPIIAHNRGEERNKKIDFQWVQGDVCEVQLMVYNPMPFELRVENMGLLTSGVEFESLPAALSLPAESGLYPVTLVGVPQTTGTITVNGYHTTVFGVFSDCLLDNLPGIKTSGSTVEVIPALPRLQISTSLPRSAHSLQPSSGDEISTNVSVQLYNGESQQLIIKLENIGMEPLEKLEVTSKVLTTKEKLYGDFLSWKLEETLAQFPLQPGKVATFTINIKVKLDFSCQENLLQDLSDDGISVSGFPLSSPFRQVVRPRVEGKPVNPPESNKAGDYSHVKTLEAVLNFKYSGGPGHTEGYYRNLSLGLHVEVEPSVFFTRVSTLPATSTRQCHLLLDVFNSTEHELTVSTRSSEALILHAGECQRMAIQVDKFNFESFPESPGEKGQFANPKQLEEERREARGLEIHSKLGICWRIPSLKRSGEASVEGLLNQLVLEHLQLAPLQWDVLVDGQPCDREAVAACQVGDPVRLEVRLTNRSPRSVGPFALTVVPFQDHQNGVHNYDLHDTVSFVGSSTFYLDAVQPSGQSACLGALLFLYTGDFFLHIRFHEDSTSKELPPSWFCLPSVHVCALEAQA.

Phosphoserine is present on residues Ser566 and Ser953.

Belongs to the NIBP family. Component of the multisubunit TRAPP (transport protein particle) complex, which includes at least TRAPPC2, TRAPPC2L, TRAPPC3, TRAPPC3L, TRAPPC4, TRAPPC5, TRAPPC8, TRAPPC9, TRAPPC10, TRAPPC11 and TRAPPC12. Directly interacts with IKBKB and MAP3K14. As to expression, expressed at high levels in muscle and kidney and to a lower extent in brain, heart and placenta.

It is found in the golgi apparatus. The protein resides in the cis-Golgi network. Its subcellular location is the endoplasmic reticulum. The protein localises to the cytoplasm. In terms of biological role, functions as an activator of NF-kappa-B through increased phosphorylation of the IKK complex. May function in neuronal cells differentiation. May play a role in vesicular transport from endoplasmic reticulum to Golgi. This chain is Trafficking protein particle complex subunit 9 (TRAPPC9), found in Homo sapiens (Human).